The chain runs to 770 residues: Low-density lipoprotein receptor-related protein 3 (770 aa).

The first 36 residues, 1–36, serve as a signal peptide directing secretion; the sequence is MEKRAAAGPEGAPGARAPLAVVCLVNLFLTGRLSSA. Over 37 to 496 the chain is Extracellular; sequence VPALAACSGK…HGCLAAVPRK (460 aa). Disulfide bonds link C43-C72, C99-C120, C166-C178, C173-C191, C185-C200, C212-C227, C219-C240, C234-C249, and C254-C282. The CUB 1 domain maps to 43-159; the sequence is CSGKLEQHTE…QGFRLSYIRG (117 aa). Residue N71 is glycosylated (N-linked (GlcNAc...) asparagine). 2 LDL-receptor class A domains span residues 165-201 and 211-250; these read SCQT…GNCS and LCPG…AGCP. An N-linked (GlcNAc...) asparagine glycan is attached at N199. The CUB 2 domain occupies 254–365; sequence CGRRLGSFYG…HGFNATYQVK (112 aa). N359 carries N-linked (GlcNAc...) asparagine glycosylation. LDL-receptor class A domains follow at residues 415–453 and 454–490; these read ACPP…KNCF and SCQP…HGCL. Intrachain disulfides connect C416–C430, C423–C443, C437–C452, C455–C467, C462–C480, and C474–C489. The chain crosses the membrane as a helical span at residues 497-517; it reads VITAALIGSLVCGLLLVIALG. Topologically, residues 518–770 are cytoplasmic; the sequence is CAFKLYSLRT…ASDDEALLVC (253 aa). The disordered stretch occupies residues 639–753; it reads LLQAAPGPVP…PLGVCRSPPP (115 aa). A compositionally biased stretch (basic and acidic residues) spans 689 to 703; sequence RDPEYRPEDKERKAC.

It belongs to the LDLR family. As to quaternary structure, binds GGA1 and GGA2.

Its subcellular location is the membrane. The protein localises to the coated pit. Functionally, probable receptor, which may be involved in the internalization of lipophilic molecules and/or signal transduction. Its precise role is however unclear, since it does not bind to very low density lipoprotein (VLDL) or to LRPAP1 in vitro. The protein is Low-density lipoprotein receptor-related protein 3 (Lrp3) of Rattus norvegicus (Rat).